Consider the following 66-residue polypeptide: Large ribosomal subunit protein uL29 (66 aa).

The protein belongs to the universal ribosomal protein uL29 family.

This chain is Large ribosomal subunit protein uL29, found in Borrelia turicatae (strain 91E135).